Here is a 154-residue protein sequence, read N- to C-terminus: Transcriptional repressor NrdR (154 aa).

The segment at 3-34 (CPYCRHPDSRVVDSREADDGQLIRRRRSCPEC) is a zinc-finger region. The ATP-cone domain occupies 46 to 136 (LAVVKRSGVT…VYRSFESLAD (91 aa)).

Belongs to the NrdR family. Zn(2+) is required as a cofactor.

Negatively regulates transcription of bacterial ribonucleotide reductase nrd genes and operons by binding to NrdR-boxes. This Salinispora tropica (strain ATCC BAA-916 / DSM 44818 / JCM 13857 / NBRC 105044 / CNB-440) protein is Transcriptional repressor NrdR.